The following is a 209-amino-acid chain: Kynurenine formamidase (209 aa).

Tryptophan 19 contacts substrate. Zn(2+)-binding residues include histidine 49, histidine 53, and aspartate 55. Catalysis depends on histidine 59, which acts as the Proton donor/acceptor. Positions 160 and 172 each coordinate Zn(2+).

Belongs to the Cyclase 1 superfamily. KynB family. As to quaternary structure, homodimer. Requires Zn(2+) as cofactor.

The catalysed reaction is N-formyl-L-kynurenine + H2O = L-kynurenine + formate + H(+). It functions in the pathway amino-acid degradation; L-tryptophan degradation via kynurenine pathway; L-kynurenine from L-tryptophan: step 2/2. Functionally, catalyzes the hydrolysis of N-formyl-L-kynurenine to L-kynurenine, the second step in the kynurenine pathway of tryptophan degradation. This Ralstonia nicotianae (strain ATCC BAA-1114 / GMI1000) (Ralstonia solanacearum) protein is Kynurenine formamidase.